A 101-amino-acid chain; its full sequence is MEPVDPRLEPWKHPGSQPKTACTNCYCKKCCFHCQVCFITKGLGISYGRKKRRQRRRAPPDSEVHQVSLPKQPASQPQGDPTGPKESKKKVERETETDPVH.

The interval 1–24 (MEPVDPRLEPWKHPGSQPKTACTN) is interaction with human CREBBP. The tract at residues 1-48 (MEPVDPRLEPWKHPGSQPKTACTNCYCKKCCFHCQVCFITKGLGISYG) is transactivation. 3 residues coordinate Zn(2+): Cys22, Cys25, and Cys27. Residues 22 to 37 (CTNCYCKKCCFHCQVC) form a cysteine-rich region. N6-acetyllysine; by host PCAF is present on Lys28. Residues Cys30, His33, Cys34, and Cys37 each contribute to the Zn(2+) site. Positions 38–48 (FITKGLGISYG) are core. Positions 48 to 57 (GRKKRRQRRR) are enriched in basic residues. The segment at 48-101 (GRKKRRQRRRAPPDSEVHQVSLPKQPASQPQGDPTGPKESKKKVERETETDPVH) is disordered. The Nuclear localization signal, RNA-binding (TAR), and protein transduction motif lies at 49-57 (RKKRRQRRR). Positions 49 to 86 (RKKRRQRRRAPPDSEVHQVSLPKQPASQPQGDPTGPKE) are interaction with the host capping enzyme RNGTT. Lys50 and Lys51 each carry N6-acetyllysine; by host EP300 and GCN5L2. Residues Arg52 and Arg53 each carry the asymmetric dimethylarginine; by host PRMT6 modification. Residue Lys71 forms a Glycyl lysine isopeptide (Lys-Gly) (interchain with G-Cter in ubiquitin) linkage. The segment covering 83-101 (GPKESKKKVERETETDPVH) has biased composition (basic and acidic residues).

Belongs to the lentiviruses Tat family. Interacts with host CCNT1. Associates with the P-TEFb complex composed at least of Tat, P-TEFb (CDK9 and CCNT1), TAR RNA, RNA Pol II. Recruits the HATs CREBBP, TAF1/TFIID, EP300, PCAF and GCN5L2. Interacts with host KAT5/Tip60; this interaction targets the latter to degradation. Interacts with the host deacetylase SIRT1. Interacts with host capping enzyme RNGTT; this interaction stimulates RNGTT. Binds to host KDR, and to the host integrins ITGAV/ITGB3 and ITGA5/ITGB1. Interacts with host KPNB1/importin beta-1 without previous binding to KPNA1/importin alpha-1. Interacts with EIF2AK2. Interacts with host nucleosome assembly protein NAP1L1; this interaction may be required for the transport of Tat within the nucleus, since the two proteins interact at the nuclear rim. Interacts with host C1QBP/SF2P32; this interaction involves lysine-acetylated Tat. Interacts with the host chemokine receptors CCR2, CCR3 and CXCR4. Interacts with host DPP4/CD26; this interaction may trigger an anti-proliferative effect. Interacts with host LDLR. Interacts with the host extracellular matrix metalloproteinase MMP1. Interacts with host PRMT6; this interaction mediates Tat's methylation. Interacts with, and is ubiquitinated by MDM2/Hdm2. Interacts with host PSMC3 and HTATIP2. Interacts with STAB1; this interaction may overcome SATB1-mediated repression of IL2 and IL2RA (interleukin) in T cells by binding to the same domain than HDAC1. Interacts (when acetylated) with human CDK13, thereby increasing HIV-1 mRNA splicing and promoting the production of the doubly spliced HIV-1 protein Nef. Interacts with host TBP; this interaction modulates the activity of transcriptional pre-initiation complex. Interacts with host RELA. Interacts with host PLSCR1; this interaction negatively regulates Tat transactivation activity by altering its subcellular distribution. Post-translationally, asymmetrical arginine methylation by host PRMT6 seems to diminish the transactivation capacity of Tat and affects the interaction with host CCNT1. Acetylation by EP300, CREBBP, GCN5L2/GCN5 and PCAF regulates the transactivation activity of Tat. EP300-mediated acetylation of Lys-50 promotes dissociation of Tat from the TAR RNA through the competitive binding to PCAF's bromodomain. In addition, the non-acetylated Tat's N-terminus can also interact with PCAF. PCAF-mediated acetylation of Lys-28 enhances Tat's binding to CCNT1. Lys-50 is deacetylated by SIRT1. In terms of processing, polyubiquitination by host MDM2 does not target Tat to degradation, but activates its transactivation function and fosters interaction with CCNT1 and TAR RNA. Post-translationally, phosphorylated by EIF2AK2 on serine and threonine residues adjacent to the basic region important for TAR RNA binding and function. Phosphorylation of Tat by EIF2AK2 is dependent on the prior activation of EIF2AK2 by dsRNA.

It localises to the host nucleus. The protein localises to the host nucleolus. Its subcellular location is the host cytoplasm. The protein resides in the secreted. Transcriptional activator that increases RNA Pol II processivity, thereby increasing the level of full-length viral transcripts. Recognizes a hairpin structure at the 5'-LTR of the nascent viral mRNAs referred to as the transactivation responsive RNA element (TAR) and recruits the cyclin T1-CDK9 complex (P-TEFb complex) that will in turn hyperphosphorylate the RNA polymerase II to allow efficient elongation. The CDK9 component of P-TEFb and other Tat-activated kinases hyperphosphorylate the C-terminus of RNA Pol II that becomes stabilized and much more processive. Other factors such as HTATSF1/Tat-SF1, SUPT5H/SPT5, and HTATIP2 are also important for Tat's function. Besides its effect on RNA Pol II processivity, Tat induces chromatin remodeling of proviral genes by recruiting the histone acetyltransferases (HATs) CREBBP, EP300 and PCAF to the chromatin. This also contributes to the increase in proviral transcription rate, especially when the provirus integrates in transcriptionally silent region of the host genome. To ensure maximal activation of the LTR, Tat mediates nuclear translocation of NF-kappa-B by interacting with host RELA. Through its interaction with host TBP, Tat may also modulate transcription initiation. Tat can reactivate a latently infected cell by penetrating in it and transactivating its LTR promoter. In the cytoplasm, Tat is thought to act as a translational activator of HIV-1 mRNAs. Functionally, extracellular circulating Tat can be endocytosed by surrounding uninfected cells via the binding to several surface receptors such as CD26, CXCR4, heparan sulfate proteoglycans (HSPG) or LDLR. Neurons are rarely infected, but they internalize Tat via their LDLR. Through its interaction with nuclear HATs, Tat is potentially able to control the acetylation-dependent cellular gene expression. Modulates the expression of many cellular genes involved in cell survival, proliferation or in coding for cytokines or cytokine receptors. Tat plays a role in T-cell and neurons apoptosis. Tat induced neurotoxicity and apoptosis probably contribute to neuroAIDS. Circulating Tat also acts as a chemokine-like and/or growth factor-like molecule that binds to specific receptors on the surface of the cells, affecting many cellular pathways. In the vascular system, Tat binds to ITGAV/ITGB3 and ITGA5/ITGB1 integrins dimers at the surface of endothelial cells and competes with bFGF for heparin-binding sites, leading to an excess of soluble bFGF. The protein is Protein Tat of Human immunodeficiency virus type 1 group M subtype B (isolate SF162) (HIV-1).